Here is a 440-residue protein sequence, read N- to C-terminus: Glucose-1-phosphate adenylyltransferase (440 aa).

Residues Tyr125, Gly190, 205–206, and Ser223 each bind alpha-D-glucose 1-phosphate; that span reads EK.

The protein belongs to the bacterial/plant glucose-1-phosphate adenylyltransferase family. Homotetramer.

It catalyses the reaction alpha-D-glucose 1-phosphate + ATP + H(+) = ADP-alpha-D-glucose + diphosphate. It functions in the pathway glycan biosynthesis; glycogen biosynthesis. Functionally, involved in the biosynthesis of ADP-glucose, a building block required for the elongation reactions to produce glycogen. Catalyzes the reaction between ATP and alpha-D-glucose 1-phosphate (G1P) to produce pyrophosphate and ADP-Glc. The chain is Glucose-1-phosphate adenylyltransferase from Dechloromonas aromatica (strain RCB).